Here is a 33-residue protein sequence, read N- to C-terminus: Dermaseptin-J7 (33 aa).

Val33 carries the valine amide modification.

As to expression, expressed by the skin glands.

It localises to the secreted. Functionally, has antimicrobial activity. This chain is Dermaseptin-J7, found in Phasmahyla jandaia (Jandaia leaf frog).